Consider the following 327-residue polypeptide: tRNA dimethylallyltransferase (327 aa).

Position 18–25 (18–25 (GPTASGKT)) interacts with ATP. 20 to 25 (TASGKT) contacts substrate. Interaction with substrate tRNA stretches follow at residues 43–46 (DSAL), 167–171 (QRVQR), and 251–256 (RCVGYR).

Belongs to the IPP transferase family. Monomer. Requires Mg(2+) as cofactor.

The catalysed reaction is adenosine(37) in tRNA + dimethylallyl diphosphate = N(6)-dimethylallyladenosine(37) in tRNA + diphosphate. Catalyzes the transfer of a dimethylallyl group onto the adenine at position 37 in tRNAs that read codons beginning with uridine, leading to the formation of N6-(dimethylallyl)adenosine (i(6)A). The protein is tRNA dimethylallyltransferase of Methylibium petroleiphilum (strain ATCC BAA-1232 / LMG 22953 / PM1).